Consider the following 355-residue polypeptide: Beta-1,2-mannobiose phosphorylase (355 aa).

Residues N31, R46, R89, E140 to D141, K188, Y273, and D333 each bind beta-D-Manp-(1-&gt;2)-beta-D-Manp-(1-&gt;2)-D-Manp.

The protein belongs to the glycosyl hydrolase 130 family. Homodimer.

It carries out the reaction beta-D-mannopyranosyl-(1-&gt;2)-D-mannopyranose + phosphate = alpha-D-mannose 1-phosphate + D-mannose. In terms of biological role, catalyzes the reversible phosphorolysis of 1,2-beta-oligomannan. In phosphorolytic reactions, prefers beta-1,2-mannobiose (beta-1,2-Man2) as substrate, but can also use beta-1,2-mannotriose. The sequence is that of Beta-1,2-mannobiose phosphorylase from Listeria innocua serovar 6a (strain ATCC BAA-680 / CLIP 11262).